An 89-amino-acid chain; its full sequence is Small ribosomal subunit protein uS14 (89 aa).

The protein belongs to the universal ribosomal protein uS14 family. In terms of assembly, part of the 30S ribosomal subunit. Contacts proteins S3 and S10.

In terms of biological role, binds 16S rRNA, required for the assembly of 30S particles and may also be responsible for determining the conformation of the 16S rRNA at the A site. The sequence is that of Small ribosomal subunit protein uS14 from Leuconostoc citreum (strain KM20).